Consider the following 310-residue polypeptide: Acetyl-coenzyme A carboxylase carboxyl transferase subunit beta (310 aa).

The region spanning 27–296 is the CoA carboxyltransferase N-terminal domain; the sequence is LWRKCPNCEA…QDRDAEPDDT (270 aa). Zn(2+) is bound by residues cysteine 31, cysteine 34, cysteine 50, and cysteine 53. The segment at 31–53 adopts a C4-type zinc-finger fold; sequence CPNCEAVLYLPELERHQSVCPKC. Residues 282 to 310 are disordered; the sequence is THQPHQDRDAEPDDTASQSTLDEFSQADH.

The protein belongs to the AccD/PCCB family. Acetyl-CoA carboxylase is a heterohexamer composed of biotin carboxyl carrier protein (AccB), biotin carboxylase (AccC) and two subunits each of ACCase subunit alpha (AccA) and ACCase subunit beta (AccD). Zn(2+) is required as a cofactor.

The protein localises to the cytoplasm. It carries out the reaction N(6)-carboxybiotinyl-L-lysyl-[protein] + acetyl-CoA = N(6)-biotinyl-L-lysyl-[protein] + malonyl-CoA. It functions in the pathway lipid metabolism; malonyl-CoA biosynthesis; malonyl-CoA from acetyl-CoA: step 1/1. Its function is as follows. Component of the acetyl coenzyme A carboxylase (ACC) complex. Biotin carboxylase (BC) catalyzes the carboxylation of biotin on its carrier protein (BCCP) and then the CO(2) group is transferred by the transcarboxylase to acetyl-CoA to form malonyl-CoA. In Chromohalobacter salexigens (strain ATCC BAA-138 / DSM 3043 / CIP 106854 / NCIMB 13768 / 1H11), this protein is Acetyl-coenzyme A carboxylase carboxyl transferase subunit beta.